The chain runs to 196 residues: Protein TEX261 (196 aa).

5 helical membrane-spanning segments follow: residues 3–23 (FMYL…TLAV), 42–62 (SRII…LYVF), 70–90 (IGVG…FPFI), 97–117 (FILS…FFAE), and 125–145 (VLAY…VSLS).

The protein belongs to the SVP26 family.

Its subcellular location is the membrane. The chain is Protein TEX261 (TEX261) from Pongo abelii (Sumatran orangutan).